Here is a 44-residue protein sequence, read N- to C-terminus: uncharacterized protein (44 aa).

Residues 6-26 form a helical membrane-spanning segment; that stretch reads SILIRGGGGVLIVLILLLWIV.

The protein localises to the membrane. This is an uncharacterized protein from Ornithodoros (relapsing fever ticks).